The following is a 171-amino-acid chain: Protein GrpE (171 aa).

The tract at residues 1 to 20 (MNEEKEESPSTEAEGAGAEV) is disordered.

It belongs to the GrpE family. As to quaternary structure, homodimer.

The protein localises to the cytoplasm. Participates actively in the response to hyperosmotic and heat shock by preventing the aggregation of stress-denatured proteins, in association with DnaK and GrpE. It is the nucleotide exchange factor for DnaK and may function as a thermosensor. Unfolded proteins bind initially to DnaJ; upon interaction with the DnaJ-bound protein, DnaK hydrolyzes its bound ATP, resulting in the formation of a stable complex. GrpE releases ADP from DnaK; ATP binding to DnaK triggers the release of the substrate protein, thus completing the reaction cycle. Several rounds of ATP-dependent interactions between DnaJ, DnaK and GrpE are required for fully efficient folding. The protein is Protein GrpE of Acidithiobacillus ferrooxidans (strain ATCC 23270 / DSM 14882 / CIP 104768 / NCIMB 8455) (Ferrobacillus ferrooxidans (strain ATCC 23270)).